Here is a 340-residue protein sequence, read N- to C-terminus: Heat-inducible transcription repressor HrcA (340 aa).

The protein belongs to the HrcA family.

In terms of biological role, negative regulator of class I heat shock genes (grpE-dnaK-dnaJ and groELS operons). Prevents heat-shock induction of these operons. The protein is Heat-inducible transcription repressor HrcA of Burkholderia ambifaria (strain MC40-6).